The following is a 286-amino-acid chain: MTKADTIFKENITKIMEEGVWSEQARPKYKDGTTANSKYITGSFAEYDLSKGEFPITTLRPIAIKSAIKEVFWIYQDQTNSLDVLEDKYNVHYWNDWEVEGVPANNGDKRSIGQRYGAVVKKHDIINRLLAQLEANPWNRRNVISLWDYEAFEETAGLQPCAFQTMFDVRRVGEDVYLDATLTQRSNDMLVAHHINAMQYVALQMMIAKHFGWKVGKFFYFINNLHIYDNQFEQAEELLKRQPSDCQPRLVLNVPDETNFFDIKPEDFELVDYDPVKPQLKFDLAI.

140–141 (RR) serves as a coordination point for dUMP. Cys161 (nucleophile) is an active-site residue. Residues 185-188 (RSND), Asn196, and 226-228 (HIY) each bind dUMP. Residue Asp188 coordinates (6R)-5,10-methylene-5,6,7,8-tetrahydrofolate. Ala285 contacts (6R)-5,10-methylene-5,6,7,8-tetrahydrofolate.

The protein belongs to the thymidylate synthase family. Bacterial-type ThyA subfamily. In terms of assembly, homodimer.

Its subcellular location is the cytoplasm. It carries out the reaction dUMP + (6R)-5,10-methylene-5,6,7,8-tetrahydrofolate = 7,8-dihydrofolate + dTMP. It functions in the pathway pyrimidine metabolism; dTTP biosynthesis. Its function is as follows. Catalyzes the reductive methylation of 2'-deoxyuridine-5'-monophosphate (dUMP) to 2'-deoxythymidine-5'-monophosphate (dTMP) while utilizing 5,10-methylenetetrahydrofolate (mTHF) as the methyl donor and reductant in the reaction, yielding dihydrofolate (DHF) as a by-product. This enzymatic reaction provides an intracellular de novo source of dTMP, an essential precursor for DNA biosynthesis. This Streptococcus thermophilus (strain ATCC BAA-491 / LMD-9) protein is Thymidylate synthase.